The sequence spans 280 residues: Probable endonuclease 4 (280 aa).

Zn(2+) contacts are provided by H69, H109, E145, D179, H182, H216, D229, H231, and E261.

This sequence belongs to the AP endonuclease 2 family. The cofactor is Zn(2+).

The enzyme catalyses Endonucleolytic cleavage to 5'-phosphooligonucleotide end-products.. Endonuclease IV plays a role in DNA repair. It cleaves phosphodiester bonds at apurinic or apyrimidinic (AP) sites, generating a 3'-hydroxyl group and a 5'-terminal sugar phosphate. This chain is Probable endonuclease 4, found in Photorhabdus laumondii subsp. laumondii (strain DSM 15139 / CIP 105565 / TT01) (Photorhabdus luminescens subsp. laumondii).